The primary structure comprises 146 residues: Leghemoglobin Lb120-34 (146 aa).

Positions 2–146 constitute a Globin domain; it reads GFTEKQEALV…LASAIKKAMN (145 aa). 2 positions are modified to nitrated tyrosine: Tyr24 and Tyr29. Ser44 contacts heme b. Ser44 bears the Phosphoserine mark. His61 provides a ligand contact to O2. Heme b contacts are provided by Lys64, His93, and Lys96. Tyr134 is subject to Nitrated tyrosine.

Belongs to the plant globin family. In terms of assembly, monomer. Nitrated in effective nodules and particularly in hypoxic conditions; this mechanism may play a protective role in the symbiosis by buffering toxic peroxynitrite NO(2)(-). Nitration level decrease during nodule senescence. Post-translationally, phosphorylation at Ser-44 disrupts the molecular environment of its porphyrin ring oxygen binding pocket, thus leading to a reduced oxygen consumption and to the delivery of oxygen O(2) to symbiosomes. As to expression, root nodules.

It is found in the cytoplasm. The protein resides in the cytosol. It localises to the nucleus. Functionally, leghemoglobin that reversibly binds oxygen O(2) through a pentacoordinated heme iron. In root nodules, facilitates the diffusion of oxygen to the bacteroids while preventing the bacterial nitrogenase from being inactivated by buffering dioxygen, nitric oxide and carbon monoxide, and promoting the formation of reactive oxygen species (ROS, e.g. H(2)O(2)). This role is essential for symbiotic nitrogen fixation (SNF). The polypeptide is Leghemoglobin Lb120-34 (Pisum sativum (Garden pea)).